Consider the following 140-residue polypeptide: Nucleoside diphosphate kinase (140 aa).

The ATP site is built by lysine 11, phenylalanine 59, arginine 87, threonine 93, arginine 104, and asparagine 114. Histidine 117 serves as the catalytic Pros-phosphohistidine intermediate.

This sequence belongs to the NDK family. Homotetramer. Mg(2+) is required as a cofactor.

It is found in the cytoplasm. It carries out the reaction a 2'-deoxyribonucleoside 5'-diphosphate + ATP = a 2'-deoxyribonucleoside 5'-triphosphate + ADP. The catalysed reaction is a ribonucleoside 5'-diphosphate + ATP = a ribonucleoside 5'-triphosphate + ADP. In terms of biological role, major role in the synthesis of nucleoside triphosphates other than ATP. The ATP gamma phosphate is transferred to the NDP beta phosphate via a ping-pong mechanism, using a phosphorylated active-site intermediate. The protein is Nucleoside diphosphate kinase of Azorhizobium caulinodans (strain ATCC 43989 / DSM 5975 / JCM 20966 / LMG 6465 / NBRC 14845 / NCIMB 13405 / ORS 571).